The following is a 1044-amino-acid chain: Diacylglycerol lipase-alpha (1044 aa).

Over 1-22 the chain is Cytoplasmic; that stretch reads MPGIVVFRRRWSVGSDDLVLPA. The helical transmembrane segment at 23-43 threads the bilayer; the sequence is IFLFLLHTTWFVILSVVLFGL. Residues 44–60 are Extracellular-facing; that stretch reads VYNPHEACSLNLVDHGR. The chain crosses the membrane as a helical span at residues 61–81; sequence GYLGILLSCMIAEMAIIWLSM. The Cytoplasmic portion of the chain corresponds to 82–101; sequence RGGILYTEPRDSMQYVLYVR. The chain crosses the membrane as a helical span at residues 102 to 122; the sequence is LAILVIEFIYAIVGIVWLTQY. Residues 123-136 lie on the Extracellular side of the membrane; it reads YTSCNDLTAKNVTL. N133 is a glycosylation site (N-linked (GlcNAc...) asparagine). Residues 137-157 traverse the membrane as a helical segment; that stretch reads GMVVCNWVVILSVCITVLCVF. Over 158–1044 the chain is Cytoplasmic; that stretch reads DPTGRTFVKL…KQDDLVISAR (887 aa). Active-site charge relay system residues include S472 and D524. Phosphoserine is present on residues S728, S730, S733, S744, S784, S786, S808, S810, S835, S849, and S954. The interval 848–905 is disordered; sequence LSKHSQDTQPLEAALGSGGVTPERPPSAANDEEEAAGGSEGGGVAPRGELALHNGRLG. Positions 1013 to 1044 are disordered; the sequence is QECLATDKIRTSTPTGHGASPTKQDDLVISAR. At T1025 the chain carries Phosphothreonine.

The protein belongs to the AB hydrolase superfamily. Lipase family. As to quaternary structure, interacts (via C-terminal) with CAMK2A; leading to the phosphorylation and inhibition of DAGLA enzymatic activity. Interacts (via PPXXF motif) with HOMER1 and HOMER2; this interaction is required for DAGLA membrane localization. It depends on Ca(2+) as a cofactor. In terms of processing, phosphorylated at Ser-784 and Ser-810 by CAMK2A; phosphorylation by CAMK2A inhibits diacylglycerol lipase activity.

The protein localises to the cell membrane. Its subcellular location is the cell projection. The protein resides in the dendritic spine membrane. It is found in the postsynaptic density membrane. It localises to the early endosome membrane. It catalyses the reaction a 1,2-diacyl-sn-glycerol + H2O = a 2-acylglycerol + a fatty acid + H(+). The catalysed reaction is 1-octadecanoyl-2-(5Z,8Z,11Z,14Z-eicosatetraenoyl)-sn-glycerol + H2O = 2-(5Z,8Z,11Z,14Z-eicosatetraenoyl)-glycerol + octadecanoate + H(+). The enzyme catalyses 1,2-di-(9Z-octadecenoyl)-sn-glycerol + H2O = 2-(9Z-octadecenoyl)-glycerol + (9Z)-octadecenoate + H(+). It carries out the reaction 1-(9Z-octadecenoyl)-2-(5Z,8Z,11Z,14Z-eicosatetraenoyl)-sn-glycerol + H2O = 2-(5Z,8Z,11Z,14Z-eicosatetraenoyl)-glycerol + (9Z)-octadecenoate + H(+). It catalyses the reaction 1-(9Z-octadecenoyl)-2-octadecanoyl-sn-glycerol + H2O = 2-octadecanoylglycerol + (9Z)-octadecenoate + H(+). The catalysed reaction is 1-(9Z-octadecenoyl)-2-(9Z,12Z-octadecadienoyl)-sn-glycerol + H2O = 2-(9Z,12Z-octadecadienoyl)-glycerol + (9Z)-octadecenoate + H(+). The enzyme catalyses 1-(9Z-octadecenoyl)-2-O-(5Z,8Z,11Z,14Z-eicosatetraenyl)-sn-glycerol + H2O = 2-O-(5Z,8Z,11Z,14Z)-eicosatetraenylglycerol + (9Z)-octadecenoate + H(+). With respect to regulation, inhibited by 1,2,3-triazole urea covalent inhibitors KT172, DH376 and DO34. Inhibited by p-hydroxy-mercuri-benzoate and HgCl(2), but not to PMSF. Also inhibited by RHC80267. Diacylglycerol lipase activity is inhibited by the phosphorylation of Ser-784 and Ser-810 by CAMK2A. In terms of biological role, serine hydrolase that hydrolyzes arachidonic acid-esterified diacylglycerols (DAGs) to produce the principal endocannabinoid, 2-arachidonoylglycerol (2-AG). Preferentially hydrolyzes sn-1 fatty acids from diacylglycerols (DAG) that contain arachidonic acid (AA) esterified at the sn-2 position to biosynthesize 2-AG. Has negligible activity against other lipids including monoacylglycerols and phospholipids. Plays a key role in regulating 2-AG signaling in the CNS. Controls the activity of 2-AG as a retrograde messenger at neuronal synapses. Supports axonal growth during development and adult neurogenesis. Plays a role for eCB signaling in the physiological regulation of anxiety and depressive behaviors. Also regulates neuroinflammatory responses in the brain, in particular, LPS-induced microglial activation. This chain is Diacylglycerol lipase-alpha (Dagla), found in Rattus norvegicus (Rat).